Here is a 396-residue protein sequence, read N- to C-terminus: Tryptophan synthase beta chain (396 aa).

Lysine 86 is subject to N6-(pyridoxal phosphate)lysine.

It belongs to the TrpB family. Tetramer of two alpha and two beta chains. Pyridoxal 5'-phosphate serves as cofactor.

It carries out the reaction (1S,2R)-1-C-(indol-3-yl)glycerol 3-phosphate + L-serine = D-glyceraldehyde 3-phosphate + L-tryptophan + H2O. The protein operates within amino-acid biosynthesis; L-tryptophan biosynthesis; L-tryptophan from chorismate: step 5/5. Its function is as follows. The beta subunit is responsible for the synthesis of L-tryptophan from indole and L-serine. The chain is Tryptophan synthase beta chain from Erwinia tasmaniensis (strain DSM 17950 / CFBP 7177 / CIP 109463 / NCPPB 4357 / Et1/99).